A 432-amino-acid chain; its full sequence is Glutamate-1-semialdehyde 2,1-aminomutase (432 aa).

N6-(pyridoxal phosphate)lysine is present on lysine 270.

Belongs to the class-III pyridoxal-phosphate-dependent aminotransferase family. HemL subfamily. In terms of assembly, homodimer. It depends on pyridoxal 5'-phosphate as a cofactor.

The protein resides in the cytoplasm. The enzyme catalyses (S)-4-amino-5-oxopentanoate = 5-aminolevulinate. Its pathway is porphyrin-containing compound metabolism; protoporphyrin-IX biosynthesis; 5-aminolevulinate from L-glutamyl-tRNA(Glu): step 2/2. This is Glutamate-1-semialdehyde 2,1-aminomutase from Acinetobacter baumannii (strain ACICU).